Reading from the N-terminus, the 237-residue chain is Ribonuclease PH (237 aa).

Residues Arg86 and 124-126 (GTR) each bind phosphate.

The protein belongs to the RNase PH family. In terms of assembly, homohexameric ring arranged as a trimer of dimers.

The catalysed reaction is tRNA(n+1) + phosphate = tRNA(n) + a ribonucleoside 5'-diphosphate. Its function is as follows. Phosphorolytic 3'-5' exoribonuclease that plays an important role in tRNA 3'-end maturation. Removes nucleotide residues following the 3'-CCA terminus of tRNAs; can also add nucleotides to the ends of RNA molecules by using nucleoside diphosphates as substrates, but this may not be physiologically important. Probably plays a role in initiation of 16S rRNA degradation (leading to ribosome degradation) during starvation. The chain is Ribonuclease PH from Cereibacter sphaeroides (strain ATCC 17029 / ATH 2.4.9) (Rhodobacter sphaeroides).